A 255-amino-acid chain; its full sequence is Putative oxidoreductase YtkK (255 aa).

An NAD(+)-binding site is contributed by 7–14; that stretch reads TAGSKGLG.

The protein belongs to the short-chain dehydrogenases/reductases (SDR) family.

The polypeptide is Putative oxidoreductase YtkK (ytkK) (Bacillus subtilis (strain 168)).